Reading from the N-terminus, the 179-residue chain is Cellular nucleic acid-binding protein homolog (179 aa).

CCHC-type zinc fingers lie at residues 17–34 (PRCY…ECTK), 36–53 (SICY…ECTE), 58–75 (KTCY…DCPS), 83–100 (AECY…DCRT), 116–133 (MNCY…DCTM), 135–152 (VKCY…ECQQ), and 157–174 (QLCY…NCTS).

This sequence to human CNBP and to retroviral nucleic acid binding proteins (NBP). Phosphorylated.

It localises to the nucleus. Its function is as follows. Acts in the sexual differentiation pathway. Is required for efficient conjugation. Double-stranded DNA-binding protein. The sequence is that of Cellular nucleic acid-binding protein homolog (byr3) from Schizosaccharomyces pombe (strain 972 / ATCC 24843) (Fission yeast).